The primary structure comprises 186 residues: Adrenodoxin, mitochondrial (186 aa).

The N-terminal 58 residues, 1 to 58 (MAVRLLRVASAALGDTAVRWQPLVGPRAGNRGPGGSIWLGLGGRAAAARTLSLSARAW), are a transit peptide targeting the mitochondrion. Residue Ser-61 is modified to Phosphoserine. N6-acetyllysine; alternate is present on Lys-64. Lys-64 carries the post-translational modification N6-succinyllysine; alternate. Residues 65-169 (ITVHFINRDG…NMTVRVPEAV (105 aa)) enclose the 2Fe-2S ferredoxin-type domain. [2Fe-2S] cluster is bound by residues Cys-104, Cys-110, Cys-113, and Cys-150. Residue Lys-156 is modified to N6-succinyllysine. At Ser-175 the chain carries Phosphoserine.

This sequence belongs to the adrenodoxin/putidaredoxin family. Interacts with CYP11A1. The cofactor is [2Fe-2S] cluster.

It localises to the mitochondrion matrix. Essential for the synthesis of various steroid hormones. Participates in the reduction of mitochondrial cytochrome P450 for steroidogenesis. Transfers electrons from adrenodoxin reductase to CYP11A1, a cytochrome P450 that catalyzes cholesterol side-chain cleavage. Does not form a ternary complex with adrenodoxin reductase and CYP11A1 but shuttles between the two enzymes to transfer electrons. In Sus scrofa (Pig), this protein is Adrenodoxin, mitochondrial (FDX1).